The following is a 116-amino-acid chain: Nucleoid-associated protein PMT9312_0020 (116 aa).

Belongs to the YbaB/EbfC family. As to quaternary structure, homodimer.

The protein resides in the cytoplasm. It is found in the nucleoid. In terms of biological role, binds to DNA and alters its conformation. May be involved in regulation of gene expression, nucleoid organization and DNA protection. This Prochlorococcus marinus (strain MIT 9312) protein is Nucleoid-associated protein PMT9312_0020.